We begin with the raw amino-acid sequence, 153 residues long: MSQKSVCVTYLLWLFFGLFGIHRFYLNRPCSGVLYLFTCGCFFIGWFIDICLIPGMVEDYNAKYDSMNKTTTTVTQVVVQPVYQGSPQQQPYGAPPQQPYGAPPQQPYGAPPQQPYGAPPQQPYGAPPPQPYGAPPPGAYAPQGNYPPPYGPQ.

Residues 3-50 (QKSVCVTYLLWLFFGLFGIHRFYLNRPCSGVLYLFTCGCFFIGWFIDI) form the TM2 domain. The next 2 membrane-spanning stretches (helical) occupy residues 6–26 (VCVT…RFYL) and 33–53 (VLYL…ICLI). The disordered stretch occupies residues 85-153 (GSPQQQPYGA…GNYPPPYGPQ (69 aa)). A run of 6 repeats spans residues 89–96 (QQPYGAPP), 97–104 (QQPYGAPP), 105–112 (QQPYGAPP), 113–120 (QQPYGAPP), 121–128 (QQPYGAPP), and 129–136 (PQPYGAPP). Positions 89–136 (QQPYGAPPQQPYGAPPQQPYGAPPQQPYGAPPQQPYGAPPPQPYGAPP) are 6 X 8 AA tandem repeat of Q-Q-P-Y-G-A-P-P. Pro residues predominate over residues 93–153 (GAPPQQPYGA…GNYPPPYGPQ (61 aa)).

This sequence belongs to the TM2 family.

It is found in the membrane. The chain is TM2 domain-containing protein DDB_G0277895 from Dictyostelium discoideum (Social amoeba).